Reading from the N-terminus, the 304-residue chain is Cell surface-binding protein OPG105 (304 aa).

The Alpha-carbonic anhydrase domain maps to 1 to 235; it reads MSQQLSPINI…NDDTEVYYSG (235 aa). Topologically, residues 1 to 275 are virion surface; the sequence is MSQQLSPINI…YQKYIEGNKT (275 aa). The chain crosses the membrane as a helical span at residues 276–294; it reads FAIIAIVFVYILTAILFLM. Residues 295 to 304 lie on the Intravirion side of the membrane; that stretch reads SRRYSREKQN.

The protein belongs to the alpha-carbonic anhydrase family. In terms of assembly, homodimer; disulfide-linked. Post-translationally, apparently non-glycosylated.

The protein localises to the virion membrane. In terms of biological role, binds to chondroitin sulfate on the cell surface to provide virion attachment to target cell. The polypeptide is Cell surface-binding protein OPG105 (OPG105) (Homo sapiens (Human)).